A 287-amino-acid polypeptide reads, in one-letter code: Pyridoxal kinase PdxY (287 aa).

Substrate is bound by residues Ser9 and 44 to 45; that span reads MQ. The ATP site is built by Asp111, Ala142, Glu147, and Lys180. Asp221 is a substrate binding site.

Belongs to the pyridoxine kinase family. PdxY subfamily. As to quaternary structure, homodimer. Mg(2+) is required as a cofactor.

It carries out the reaction pyridoxal + ATP = pyridoxal 5'-phosphate + ADP + H(+). Its pathway is cofactor metabolism; pyridoxal 5'-phosphate salvage; pyridoxal 5'-phosphate from pyridoxal: step 1/1. Its function is as follows. Pyridoxal kinase involved in the salvage pathway of pyridoxal 5'-phosphate (PLP). Catalyzes the phosphorylation of pyridoxal to PLP. The chain is Pyridoxal kinase PdxY from Burkholderia mallei (strain ATCC 23344).